We begin with the raw amino-acid sequence, 293 residues long: uncharacterized protein (293 aa).

The active site involves Glu47.

The protein belongs to the PhzF family.

This is an uncharacterized protein from Bacillus subtilis (strain 168).